The sequence spans 223 residues: Neurotrophic factor BDNF precursor form (223 aa).

Residues 1 to 5 (SCMKA) form the signal peptide. Residues 6-114 (APMKEVSIRG…AANMSMRVRR (109 aa)) constitute a propeptide that is removed on maturation. N-linked (GlcNAc...) asparagine glycosylation occurs at Asn107. 2 disulfide bridges follow: Cys127–Cys194 and Cys172–Cys223.

This sequence belongs to the NGF-beta family.

It is found in the secreted. Functionally, promotes the survival of neuronal populations that are all located either in the central nervous system or directly connected to it. In Lichanura trivirgata (Rosy boa), this protein is Neurotrophic factor BDNF precursor form (BDNF).